The primary structure comprises 420 residues: Glucose-1-phosphate adenylyltransferase (420 aa).

Alpha-D-glucose 1-phosphate is bound by residues Y107, G173, 188 to 189, and S206; that span reads EK.

The protein belongs to the bacterial/plant glucose-1-phosphate adenylyltransferase family. In terms of assembly, homotetramer.

It catalyses the reaction alpha-D-glucose 1-phosphate + ATP + H(+) = ADP-alpha-D-glucose + diphosphate. Its pathway is glycan biosynthesis; glycogen biosynthesis. Functionally, involved in the biosynthesis of ADP-glucose, a building block required for the elongation reactions to produce glycogen. Catalyzes the reaction between ATP and alpha-D-glucose 1-phosphate (G1P) to produce pyrophosphate and ADP-Glc. This chain is Glucose-1-phosphate adenylyltransferase, found in Shewanella baltica (strain OS185).